A 328-amino-acid chain; its full sequence is tRNA methyltransferase 10 homolog A (328 aa).

Disordered regions lie at residues 1–91 and 281–328; these read MSSE…RKRV and HKAC…PVLQ. Phosphoserine is present on serine 22. Residues 43-83 are a coiled coil; the sequence is RQLKKLMKQKQWEEQREQRKEKRKEKRKRKKLERRQLESNS. A compositionally biased stretch (basic and acidic residues) spans 52–62; it reads KQWEEQREQRK. A compositionally biased stretch (basic residues) spans 63–75; it reads EKRKEKRKRKKLE. One can recognise an SAM-dependent MTase TRM10-type domain in the interval 88 to 278; the sequence is RKRVRRDVAR…TILPQRKGAV (191 aa). Positions 305 to 319 are enriched in basic and acidic residues; the sequence is ESCRDNPDSPQKDEQ.

The protein belongs to the class IV-like SAM-binding methyltransferase superfamily. TRM10 family. Interacts with tRNA.

The protein localises to the nucleus. It localises to the nucleolus. The catalysed reaction is guanosine(9) in tRNA + S-adenosyl-L-methionine = N(1)-methylguanosine(9) in tRNA + S-adenosyl-L-homocysteine + H(+). In terms of biological role, S-adenosyl-L-methionine-dependent guanine N(1)-methyltransferase that catalyzes the formation of N(1)-methylguanine at position 9 (m1G9) in tRNAs. Probably not able to catalyze formation of N(1)-methyladenine at position 9 (m1A9) in tRNAs. The chain is tRNA methyltransferase 10 homolog A (Trmt10a) from Mus musculus (Mouse).